A 114-amino-acid chain; its full sequence is T cell receptor beta variable 28 (114 aa).

An N-terminal signal peptide occupies residues 1–26; sequence MGIRLLCRVAFCFLAVGLVDVKVTQS. In terms of domain architecture, Ig-like spans 27–114; that stretch reads SRYLVKRTGE…TSMYLCASSL (88 aa). Cysteines 42 and 110 form a disulfide. N-linked (GlcNAc...) asparagine glycosylation occurs at N103.

As to quaternary structure, alpha-beta TR is a heterodimer composed of an alpha and beta chain; disulfide-linked. The alpha-beta TR is associated with the transmembrane signaling CD3 coreceptor proteins to form the TR-CD3 (TcR or TCR). The assembly of alpha-beta TR heterodimers with CD3 occurs in the endoplasmic reticulum where a single alpha-beta TR heterodimer associates with one CD3D-CD3E heterodimer, one CD3G-CD3E heterodimer and one CD247 homodimer forming a stable octameric structure. CD3D-CD3E and CD3G-CD3E heterodimers preferentially associate with TR alpha and TR beta chains, respectively. The association of the CD247 homodimer is the last step of TcR assembly in the endoplasmic reticulum and is required for transport to the cell surface.

It localises to the cell membrane. In terms of biological role, v region of the variable domain of T cell receptor (TR) beta chain that participates in the antigen recognition. Alpha-beta T cell receptors are antigen specific receptors which are essential to the immune response and are present on the cell surface of T lymphocytes. Recognize peptide-major histocompatibility (MH) (pMH) complexes that are displayed by antigen presenting cells (APC), a prerequisite for efficient T cell adaptive immunity against pathogens. Binding of alpha-beta TR to pMH complex initiates TR-CD3 clustering on the cell surface and intracellular activation of LCK that phosphorylates the ITAM motifs of CD3G, CD3D, CD3E and CD247 enabling the recruitment of ZAP70. In turn ZAP70 phosphorylates LAT, which recruits numerous signaling molecules to form the LAT signalosome. The LAT signalosome propagates signal branching to three major signaling pathways, the calcium, the mitogen-activated protein kinase (MAPK) kinase and the nuclear factor NF-kappa-B (NF-kB) pathways, leading to the mobilization of transcription factors that are critical for gene expression and essential for T cell growth and differentiation. The T cell repertoire is generated in the thymus, by V-(D)-J rearrangement. This repertoire is then shaped by intrathymic selection events to generate a peripheral T cell pool of self-MH restricted, non-autoaggressive T cells. Post-thymic interaction of alpha-beta TR with the pMH complexes shapes TR structural and functional avidity. The chain is T cell receptor beta variable 28 from Homo sapiens (Human).